The primary structure comprises 64 residues: Cytochrome b-c1 complex subunit 9 (64 aa).

Residues 2 to 18 lie on the Mitochondrial matrix side of the membrane; sequence SSPTIPSRLYSLLFRRT. Residues 19 to 43 traverse the membrane as a helical segment; the sequence is STFALTIAVGALFFERAFDQGADAI. Over 44 to 63 the chain is Mitochondrial intermembrane; the sequence is YEHINEGKLWKHIKHKYENK.

The protein belongs to the UQCR10/QCR9 family. As to quaternary structure, component of the ubiquinol-cytochrome c oxidoreductase (cytochrome b-c1 complex, complex III, CIII), a multisubunit enzyme composed of 11 subunits. The complex is composed of 3 respiratory subunits cytochrome b, cytochrome c1 and Rieske protein UQCRFS1, 2 core protein subunits UQCRC1/QCR1 and UQCRC2/QCR2, and 6 low-molecular weight protein subunits UQCRH/QCR6, UQCRB/QCR7, UQCRQ/QCR8, UQCR10/QCR9, UQCR11/QCR10 and subunit 9, the cleavage product of Rieske protein UQCRFS1. The complex exists as an obligatory dimer and forms supercomplexes (SCs) in the inner mitochondrial membrane with NADH-ubiquinone oxidoreductase (complex I, CI) and cytochrome c oxidase (complex IV, CIV), resulting in different assemblies (supercomplex SCI(1)III(2)IV(1) and megacomplex MCI(2)III(2)IV(2)). Interacts with STMP1.

Its subcellular location is the mitochondrion inner membrane. In terms of biological role, component of the ubiquinol-cytochrome c oxidoreductase, a multisubunit transmembrane complex that is part of the mitochondrial electron transport chain which drives oxidative phosphorylation. The respiratory chain contains 3 multisubunit complexes succinate dehydrogenase (complex II, CII), ubiquinol-cytochrome c oxidoreductase (cytochrome b-c1 complex, complex III, CIII) and cytochrome c oxidase (complex IV, CIV), that cooperate to transfer electrons derived from NADH and succinate to molecular oxygen, creating an electrochemical gradient over the inner membrane that drives transmembrane transport and the ATP synthase. The cytochrome b-c1 complex catalyzes electron transfer from ubiquinol to cytochrome c, linking this redox reaction to translocation of protons across the mitochondrial inner membrane, with protons being carried across the membrane as hydrogens on the quinol. In the process called Q cycle, 2 protons are consumed from the matrix, 4 protons are released into the intermembrane space and 2 electrons are passed to cytochrome c. This chain is Cytochrome b-c1 complex subunit 9 (Uqcr10), found in Mus musculus (Mouse).